The chain runs to 153 residues: Vasotocin-neurophysin VT 1 (153 aa).

The first 20 residues, 1-20, serve as a signal peptide directing secretion; it reads MPYSTFPLLWVLGLLALSSA. Cys21 and Cys26 are joined by a disulfide. Gly29 carries the post-translational modification Glycine amide. 7 disulfides stabilise this stretch: Cys41-Cys85, Cys44-Cys58, Cys52-Cys75, Cys59-Cys65, Cys92-Cys104, Cys98-Cys116, and Cys105-Cys110.

Belongs to the vasopressin/oxytocin family. In terms of processing, seven disulfide bonds are present in neurophysin.

The protein localises to the secreted. In terms of biological role, vasotocin is an antidiuretic hormone. In Oncorhynchus keta (Chum salmon), this protein is Vasotocin-neurophysin VT 1.